The following is a 436-amino-acid chain: Gamma-glutamyl phosphate reductase (436 aa).

Belongs to the gamma-glutamyl phosphate reductase family.

It is found in the cytoplasm. The catalysed reaction is L-glutamate 5-semialdehyde + phosphate + NADP(+) = L-glutamyl 5-phosphate + NADPH + H(+). It participates in amino-acid biosynthesis; L-proline biosynthesis; L-glutamate 5-semialdehyde from L-glutamate: step 2/2. Catalyzes the NADPH-dependent reduction of L-glutamate 5-phosphate into L-glutamate 5-semialdehyde and phosphate. The product spontaneously undergoes cyclization to form 1-pyrroline-5-carboxylate. The sequence is that of Gamma-glutamyl phosphate reductase from Prochlorococcus marinus (strain MIT 9515).